The primary structure comprises 132 residues: S-adenosylmethionine decarboxylase proenzyme (132 aa).

Ser65 serves as the catalytic Schiff-base intermediate with substrate; via pyruvic acid. Pyruvic acid (Ser); by autocatalysis is present on Ser65. The active-site Proton acceptor; for processing activity is His70. The active-site Proton donor; for catalytic activity is the Cys85.

Belongs to the prokaryotic AdoMetDC family. Type 1 subfamily. In terms of assembly, heterotetramer of two alpha and two beta chains arranged as a dimer of alpha/beta heterodimers. Pyruvate is required as a cofactor. In terms of processing, is synthesized initially as an inactive proenzyme. Formation of the active enzyme involves a self-maturation process in which the active site pyruvoyl group is generated from an internal serine residue via an autocatalytic post-translational modification. Two non-identical subunits are generated from the proenzyme in this reaction, and the pyruvate is formed at the N-terminus of the alpha chain, which is derived from the carboxyl end of the proenzyme. The post-translation cleavage follows an unusual pathway, termed non-hydrolytic serinolysis, in which the side chain hydroxyl group of the serine supplies its oxygen atom to form the C-terminus of the beta chain, while the remainder of the serine residue undergoes an oxidative deamination to produce ammonia and the pyruvoyl group blocking the N-terminus of the alpha chain.

It catalyses the reaction S-adenosyl-L-methionine + H(+) = S-adenosyl 3-(methylsulfanyl)propylamine + CO2. Its pathway is amine and polyamine biosynthesis; S-adenosylmethioninamine biosynthesis; S-adenosylmethioninamine from S-adenosyl-L-methionine: step 1/1. In terms of biological role, catalyzes the decarboxylation of S-adenosylmethionine to S-adenosylmethioninamine (dcAdoMet), the propylamine donor required for the synthesis of the polyamines spermine and spermidine from the diamine putrescine. This chain is S-adenosylmethionine decarboxylase proenzyme, found in Symbiobacterium thermophilum (strain DSM 24528 / JCM 14929 / IAM 14863 / T).